We begin with the raw amino-acid sequence, 261 residues long: Homeobox-leucine zipper protein HOX24 (261 aa).

Disordered stretches follow at residues 42-67 and 160-188; these read AAAAGRGGGDGDGGGGGGGGGERKRR and KLNERQDQSGSCDGGGAEGDDDDKRNSVM. Residues 46–61 are compositionally biased toward gly residues; it reads GRGGGDGDGGGGGGGG. A DNA-binding region (homeobox) is located at residues 61–121; it reads GGERKRRFTE…NKRARWRSKQ (61 aa). The tract at residues 120–164 is leucine-zipper; sequence KQIEHDYAALRAQYDALHARVESLRQEKLALADQVDELRGKLNER.

This sequence belongs to the HD-ZIP homeobox family. Class I subfamily. In terms of tissue distribution, expressed in roots and panicles.

The protein resides in the nucleus. Functionally, probable transcription factor. The protein is Homeobox-leucine zipper protein HOX24 (HOX24) of Oryza sativa subsp. japonica (Rice).